The following is a 281-amino-acid chain: Probable endonuclease 4 (281 aa).

9 residues coordinate Zn(2+): His-69, His-109, Glu-145, Asp-179, His-182, His-216, Asp-229, His-231, and Glu-261.

It belongs to the AP endonuclease 2 family. Zn(2+) is required as a cofactor.

It catalyses the reaction Endonucleolytic cleavage to 5'-phosphooligonucleotide end-products.. Endonuclease IV plays a role in DNA repair. It cleaves phosphodiester bonds at apurinic or apyrimidinic (AP) sites, generating a 3'-hydroxyl group and a 5'-terminal sugar phosphate. The polypeptide is Probable endonuclease 4 (Chlorobaculum tepidum (strain ATCC 49652 / DSM 12025 / NBRC 103806 / TLS) (Chlorobium tepidum)).